The following is a 192-amino-acid chain: Ras-like GTP-binding protein O-RHO (192 aa).

GTP is bound at residue 12–19; the sequence is GDGACGKT. Residues 34–42 carry the Effector region motif; that stretch reads YVPTVFENY. GTP is bound by residues 59 to 63 and 117 to 120; these read DTAGQ and NKKT. Residue cysteine 189 is modified to Cysteine methyl ester. Residue cysteine 189 is the site of S-geranylgeranyl cysteine attachment. Residues 190–192 constitute a propeptide, removed in mature form; it reads LLL.

Belongs to the small GTPase superfamily. Rho family.

The protein resides in the cell membrane. The chain is Ras-like GTP-binding protein O-RHO from Diplobatis ommata (Ocellated electric ray).